Here is a 395-residue protein sequence, read N- to C-terminus: Testis-expressed protein 44 (395 aa).

4 disordered regions span residues 1-32 (MALP…PLTA), 46-100 (WQDI…LQVS), 133-215 (KMSQ…SDES), and 235-258 (FPPP…GRRP). Positions 53-65 (SFKTATPRAISTS) are enriched in polar residues. Residues 87–98 (PLLPSQNPSPLQ) show a composition bias toward low complexity. A compositionally biased stretch (basic and acidic residues) spans 192 to 207 (SAEEKAEHPKAPHPEA). S333 carries the phosphoserine modification.

As to expression, testis. Detected in germ cells at all stages of the seminiferous epithelium, strong expression in elongating spermatids (at protein level).

It is found in the cytoplasm. The sequence is that of Testis-expressed protein 44 from Homo sapiens (Human).